Consider the following 306-residue polypeptide: Homoserine kinase (306 aa).

91-101 (PLARGLGSSAA) serves as a coordination point for ATP.

This sequence belongs to the GHMP kinase family. Homoserine kinase subfamily.

The protein localises to the cytoplasm. It carries out the reaction L-homoserine + ATP = O-phospho-L-homoserine + ADP + H(+). Its pathway is amino-acid biosynthesis; L-threonine biosynthesis; L-threonine from L-aspartate: step 4/5. In terms of biological role, catalyzes the ATP-dependent phosphorylation of L-homoserine to L-homoserine phosphate. The protein is Homoserine kinase of Bacillus licheniformis (strain ATCC 14580 / DSM 13 / JCM 2505 / CCUG 7422 / NBRC 12200 / NCIMB 9375 / NCTC 10341 / NRRL NRS-1264 / Gibson 46).